A 318-amino-acid polypeptide reads, in one-letter code: Ubiquinol oxidase, mitochondrial (318 aa).

The N-terminal 46 residues, 1–46 (MTVMRGLLNGGRYGNRYIWTAISLRHPEVMEGNGLESAVMQWRRML), are a transit peptide targeting the mitochondrion. The chain crosses the membrane as a helical span at residues 143 to 163 (AMMLETVAAVPGMVGGMLLHL). 3 residues coordinate Fe cation: Glu-147, Glu-186, and His-189. The chain crosses the membrane as a helical span at residues 205-225 (LLVLAVQGVFFNSFFVLYVLS). Fe cation contacts are provided by Glu-237, Glu-288, and His-291.

It belongs to the alternative oxidase family. In terms of assembly, homodimer; disulfide-linked. It depends on Fe cation as a cofactor.

It is found in the mitochondrion inner membrane. The catalysed reaction is 2 a ubiquinol + O2 = 2 a ubiquinone + 2 H2O. Catalyzes the cyanide-resistant oxidation of ubiquinol and the reduction of molecular oxygen to water, but does not translocate protons and consequently is not linked to oxidative phosphorylation. May increase respiration when the cytochrome respiratory pathway is restricted, or in response to low temperatures. The sequence is that of Ubiquinol oxidase, mitochondrial (AOMI 1) from Mangifera indica (Mango).